The sequence spans 318 residues: MANTLEQLKLYTTIVADTGDIEAIKRYQPEDATTNPSLILKAAQIPEYESLIDNAIDWAKSQSDDLAQQLDDASDKLAVNIGVEILKLVPGRISTEVDARLSFDKEQSIAKAHKLVRLYKEAGVDKSRILIKLASTWEGICAARELEKEGINCNLTLLFSFAQARACAEAGAYLISPFVGRILDWYKKDTGKDYDAVNDPGVISVTEIYNYYKQHGFNTVVMGASFRNIGEIIELAGCDRLTIGPSLLEELANSQVDITPKLVAATSTVAAEAPLTEAQFRWDFNQDPMAVDKLAEGIRNFAIDQGKLEVMLTAKLAN.

K132 (schiff-base intermediate with substrate) is an active-site residue.

The protein belongs to the transaldolase family. Type 1 subfamily. In terms of assembly, homodimer.

The protein localises to the cytoplasm. It carries out the reaction D-sedoheptulose 7-phosphate + D-glyceraldehyde 3-phosphate = D-erythrose 4-phosphate + beta-D-fructose 6-phosphate. The protein operates within carbohydrate degradation; pentose phosphate pathway; D-glyceraldehyde 3-phosphate and beta-D-fructose 6-phosphate from D-ribose 5-phosphate and D-xylulose 5-phosphate (non-oxidative stage): step 2/3. Its function is as follows. Transaldolase is important for the balance of metabolites in the pentose-phosphate pathway. The protein is Transaldolase of Shewanella baltica (strain OS195).